The following is a 181-amino-acid chain: Bifunctional protein PyrR (181 aa).

A PRPP-binding motif is present at residues 100-112 (VVLVDDVIYTGRT).

This sequence belongs to the purine/pyrimidine phosphoribosyltransferase family. PyrR subfamily. As to quaternary structure, homodimer and homohexamer; in equilibrium.

The enzyme catalyses UMP + diphosphate = 5-phospho-alpha-D-ribose 1-diphosphate + uracil. In terms of biological role, regulates transcriptional attenuation of the pyrimidine nucleotide (pyr) operon by binding in a uridine-dependent manner to specific sites on pyr mRNA. This disrupts an antiterminator hairpin in the RNA and favors formation of a downstream transcription terminator, leading to a reduced expression of downstream genes. Functionally, also displays a weak uracil phosphoribosyltransferase activity which is not physiologically significant. The chain is Bifunctional protein PyrR from Pelotomaculum thermopropionicum (strain DSM 13744 / JCM 10971 / SI).